Here is a 768-residue protein sequence, read N- to C-terminus: Cullin-3 (768 aa).

Ser2 bears the N-acetylserine mark. Positions 2-41 (SNLSKGTGSRKDTKMRIRAFPMTMDEKYVNSIWDLLKNAI) are interaction with KLHL18. Ser585 is subject to Phosphoserine. The interval 677–698 (VAAKQGESDPERKETRQKVDDD) is disordered. Positions 682 to 698 (GESDPERKETRQKVDDD) are enriched in basic and acidic residues. The region spanning 698–760 (DRKHEIEAAI…REYLARTPED (63 aa)) is the Cullin neddylation domain. Residue Lys712 forms a Glycyl lysine isopeptide (Lys-Gly) (interchain with G-Cter in NEDD8) linkage.

Belongs to the cullin family. Forms neddylation-dependent homodimers. Component of multiple BCR (BTB-CUL3-RBX1) E3 ubiquitin-protein ligase complexes formed of CUL3, RBX1 and a variable BTB domain-containing protein acting as both, adapter to cullin and substrate recognition subunit. The BCR complex may be active as a heterodimeric complex, in which NEDD8, covalently attached to one CUL3 molecule, binds to the C-terminus of a second CUL3 molecule. Interacts with RBX1, RNF7, CYCE and TIP120A/CAND1. Part of the BCR(SPOP) containing SPOP, and of BCR containing homodimeric SPOPL or the heterodimer formed by SPOP and SPOPL. Part of the probable BCR(KLHL9-KLHL13) complex with BTB domain proteins KLHL9 and KLHL13. Part of the BCR(KLHL41) complex containing KLHL41. Component of the BCR(KLHL12) E3 ubiquitin ligase complex, at least composed of CUL3 and KLHL12 and RBX1. Component of the BCR(KLHL3) E3 ubiquitin ligase complex, at least composed of CUL3 and KLHL3 and RBX1. Part of the BCR(ENC1) complex containing ENC1. Part of a complex consisting of BMI1/PCGF4, CUL3 and SPOP. Part of a complex consisting of BRMS1, CUL3 and SPOP. Component of the BCR(KLHL21) E3 ubiquitin ligase complex, at least composed of CUL3, KLHL21 and RBX1. Component of the BCR(KLHL22) E3 ubiquitin ligase complex, at least composed of CUL3, KLHL22 and RBX1. Component of the BCR(KLHL25) E3 ubiquitin ligase complex, at least composed of CUL3, KLHL25 and RBX1. Part of a complex consisting of MACROH2A1, CUL3 and SPOP. Component of the BCR(KLHL42) E3 ubiquitin ligase complex, at least composed of CUL3 and KLHL42. Component of the BCR(KBTBD8) E3 ubiquitin ligase complex, at least composed of CUL3, KBTBD8 and RBX1. Interacts with KLHL42 (via the BTB domain). Interacts with KATNA1; the interaction is enhanced by KLHL42. Interacts with KCTD5, KLHL9, KLHL11, KLHL13, GAN, ZBTB16, KLHL3, KLHL15, KLHL20, KLHL36, GMCL2, BTBD1. Part of a complex that contains CUL3, RBX1 and GAN. Interacts (via BTB domain) with KLHL17; the interaction regulates surface GRIK2 expression. Interacts with KCTD7. Part of the BCR(GAN) complex containing GAN. Part of the BCR(KEAP1) complex containing KEAP1. vInteracts with KLHL10. Interacts with KAT5 and ATF2. Interacts with KCTD17 in the BCR(KCTD17) E3 ubiquitin ligase complex, at least composed of CUL3, KCTD17 and RBX1. Interacts (when neddylated) with ARIH1; leading to activate the E3 ligase activity of ARIH1. Interacts with COPS9. Interacts with PPP2R5B; this interaction is indirect and mediated through KLHL15-binding and leads to PPP2R5B proteasomal degradation. Interacts with RBBP8/CtIP; this interaction is indirect and mediated through KLHL15-binding and leads to RBBP8 proteasomal degradation. Interacts with KLHL24 in the BCR(KLHL24) E3 ubiquitin ligase complex, composed of CUL3, RBX1 and KLHL24. Interacts with RHOBTB2. Interacts (via BTB domain) with KLHL17; the interaction regulates surface GRIK2 expression. Interacts with AURKA and KLHL18 (via BTB domain). Interacts (unneddylated form) with DCUN1D1, DCUN1D2, DCUN1D3, DCUN1D4 and DCUN1D5; these interactions promote the cullin neddylation. Component of a BCR3 (BTB-CUL3-RBX1) E3 ubiquitin ligase complex, also named Cul3-RING ubiquitin ligase complex CUL3(KBTBD6/7), composed of CUL3, RBX1, KBTBD6 and KBTBD7. Component of the BCR(KBTBD2) E3 ubiquitin ligase complex, at least composed of CUL3, KBTBD2 and RBX1. Interacts with KBTBD2 (via the BTB domain). Component of the BCR(KBTBD4) E3 ubiquitin ligase complex, at least composed of CUL3, KBTBD4 and RBX1. Neddylated. Attachment of NEDD8 is required for the E3 ubiquitin-protein ligase activity of the BCR complex. Deneddylated via its interaction with the COP9 signalosome (CSN) complex.

The protein localises to the nucleus. The protein resides in the golgi apparatus. Its subcellular location is the cell projection. It is found in the cilium. It localises to the flagellum. The protein localises to the cytoplasm. The protein resides in the cytoskeleton. Its subcellular location is the spindle. It is found in the microtubule organizing center. It localises to the centrosome. The protein localises to the spindle pole. It participates in protein modification; protein ubiquitination. In terms of biological role, core component of multiple cullin-RING-based BCR (BTB-CUL3-RBX1) E3 ubiquitin-protein ligase complexes which mediate the ubiquitination and subsequent proteasomal degradation of target proteins. BCR complexes and ARIH1 collaborate in tandem to mediate ubiquitination of target proteins. As a scaffold protein may contribute to catalysis through positioning of the substrate and the ubiquitin-conjugating enzyme. The E3 ubiquitin-protein ligase activity of the complex is dependent on the neddylation of the cullin subunit and is inhibited by the association of the deneddylated cullin subunit with TIP120A/CAND1. The functional specificity of the BCR complex depends on the BTB domain-containing protein as the substrate recognition component. BCR(KLHL42) is involved in ubiquitination of KATNA1. BCR(SPOP) is involved in ubiquitination of BMI1/PCGF4, BRMS1, MACROH2A1 and DAXX, GLI2 and GLI3. Can also form a cullin-RING-based BCR (BTB-CUL3-RBX1) E3 ubiquitin-protein ligase complex containing homodimeric SPOPL or the heterodimer formed by SPOP and SPOPL; these complexes have lower ubiquitin ligase activity. BCR(KLHL9-KLHL13) controls the dynamic behavior of AURKB on mitotic chromosomes and thereby coordinates faithful mitotic progression and completion of cytokinesis. BCR(KLHL12) is involved in ER-Golgi transport by regulating the size of COPII coats, thereby playing a key role in collagen export, which is required for embryonic stem (ES) cells division: BCR(KLHL12) acts by mediating monoubiquitination of SEC31 (SEC31A or SEC31B). BCR(KLHL3) acts as a regulator of ion transport in the distal nephron; by mediating ubiquitination of WNK4. The BCR(KLHL20) E3 ubiquitin ligase complex is involved in interferon response and anterograde Golgi to endosome transport: it mediates both ubiquitination leading to degradation and 'Lys-33'-linked ubiquitination. The BCR(KLHL21) E3 ubiquitin ligase complex regulates localization of the chromosomal passenger complex (CPC) from chromosomes to the spindle midzone in anaphase and mediates the ubiquitination of AURKB. The BCR(KLHL22) ubiquitin ligase complex mediates monoubiquitination of PLK1, leading to PLK1 dissociation from phosphoreceptor proteins and subsequent removal from kinetochores, allowing silencing of the spindle assembly checkpoint (SAC) and chromosome segregation. The BCR(KLHL22) ubiquitin ligase complex is also responsible for the amino acid-stimulated 'Lys-48' polyubiquitination and proteasomal degradation of DEPDC5. Through the degradation of DEPDC5, releases the GATOR1 complex-mediated inhibition of the TORC1 pathway. The BCR(KLHL25) ubiquitin ligase complex is involved in translational homeostasis by mediating ubiquitination and subsequent degradation of hypophosphorylated EIF4EBP1 (4E-BP1). The BCR(KLHL25) ubiquitin ligase complex is also involved in lipid synthesis by mediating ubiquitination and degradation of ACLY. The BCR(KBTBD8) complex acts by mediating monoubiquitination of NOLC1 and TCOF1, leading to remodel the translational program of differentiating cells in favor of neural crest specification. Involved in ubiquitination of cyclin E and of cyclin D1 (in vitro) thus involved in regulation of G1/S transition. Involved in the ubiquitination of KEAP1, ENC1 and KLHL41. In concert with ATF2 and RBX1, promotes degradation of KAT5 thereby attenuating its ability to acetylate and activate ATM. The BCR(KCTD17) E3 ubiquitin ligase complex mediates ubiquitination and degradation of TCHP, a down-regulator of cilium assembly, thereby inducing ciliogenesis. The BCR(KLHL24) E3 ubiquitin ligase complex mediates ubiquitination of KRT14, controls KRT14 levels during keratinocytes differentiation, and is essential for skin integrity. The BCR(KLHL18) E3 ubiquitin ligase complex mediates the ubiquitination of AURKA leading to its activation at the centrosome which is required for initiating mitotic entry. The BCR(KEAP1) E3 ubiquitin ligase complex acts as a key sensor of oxidative and electrophilic stress by mediating ubiquitination and degradation of NFE2L2/NRF2, a transcription factor regulating expression of many cytoprotective genes. As part of the CUL3(KBTBD6/7) E3 ubiquitin ligase complex functions mediates 'Lys-48' ubiquitination and proteasomal degradation of TIAM1. By controlling the ubiquitination of that RAC1 guanine exchange factors (GEF), regulates RAC1 signal transduction and downstream biological processes including the organization of the cytoskeleton, cell migration and cell proliferation. The BCR(KBTBD4) E3 ubiquitin ligase complex targets CoREST corepressor complex components RCOR1, KDM1A/LSD1 and HDAC2 for proteasomal degradation with RCOR1 likely to be the primary target while degradation of KDM1A and HDAC2 is likely due to their association with RCOR1. It also targets RCOR3, MIER2 and MIER3 for proteasomal degradation as well as associated proteins ZNF217 and RREB1 with degradation being dependent on the presence of an ELM2 domain in the target proteins. The BCR(ARMC5) complex mediates premature transcription termination of transcripts that are unfavorably configured for transcriptional elongation by mediating ubiquitination of Pol II subunit POLR2A. Required for 'Lys-63'-linked ubiquitination of large ribosomal subunit protein MRPL12. This chain is Cullin-3 (Cul3), found in Rattus norvegicus (Rat).